We begin with the raw amino-acid sequence, 221 residues long: Casparian strip membrane protein 3 (221 aa).

Basic and acidic residues predominate over residues 1 to 12 (MDIEKAGSRREE). The tract at residues 1–27 (MDIEKAGSRREEEEPIVQRPKLDKGKG) is disordered. Residues 1 to 58 (MDIEKAGSRREEEEPIVQRPKLDKGKGKAHVFAPPMNYNRIMDKHKQEKMSPAGWKRG) are Cytoplasmic-facing. Residues 59–79 (VAIFDFVLRLIAAITAMAAAA) form a helical membrane-spanning segment. The Extracellular segment spans residues 80 to 109 (KMATTEETLPFFTQFLQFQADYTDLPTMSS). Residues 110–130 (FVIVNSIVGGYLTLSLPFSIV) form a helical membrane-spanning segment. Over 131–148 (CILRPLAVPPRLFLILCD) the chain is Cytoplasmic. Residues 149–169 (TVMMGLTLMAASASAAIVYLA) form a helical membrane-spanning segment. The Extracellular portion of the chain corresponds to 170 to 194 (HNGNSSSNWLPVCQQFGDFCQGTSG). Asn173 carries an N-linked (GlcNAc...) asparagine glycan. A helical membrane pass occupies residues 195–215 (AVVASFIAATLLMFLVILSAF). The Cytoplasmic segment spans residues 216 to 221 (ALKRTT).

It belongs to the Casparian strip membrane proteins (CASP) family. Homodimer and heterodimers with other CASP proteins. Interacts with CASP1, CASP2, CASP4 and CASP5.

The protein localises to the cell membrane. In terms of biological role, regulates membrane-cell wall junctions and localized cell wall deposition. Required for establishment of the Casparian strip membrane domain (CSD) and the subsequent formation of Casparian strips, a cell wall modification of the root endodermis that determines an apoplastic barrier between the intraorganismal apoplasm and the extraorganismal apoplasm and prevents lateral diffusion. The sequence is that of Casparian strip membrane protein 3 (CASP3) from Arabidopsis thaliana (Mouse-ear cress).